The following is a 313-amino-acid chain: Ribosomal RNA small subunit methyltransferase H (313 aa).

Residues 35–37 (GGH), aspartate 55, phenylalanine 79, aspartate 101, and glutamine 108 each bind S-adenosyl-L-methionine.

Belongs to the methyltransferase superfamily. RsmH family.

The protein resides in the cytoplasm. The catalysed reaction is cytidine(1402) in 16S rRNA + S-adenosyl-L-methionine = N(4)-methylcytidine(1402) in 16S rRNA + S-adenosyl-L-homocysteine + H(+). Specifically methylates the N4 position of cytidine in position 1402 (C1402) of 16S rRNA. This is Ribosomal RNA small subunit methyltransferase H from Klebsiella pneumoniae subsp. pneumoniae (strain ATCC 700721 / MGH 78578).